The primary structure comprises 397 residues: Ethanolaminephosphotransferase 1 (397 aa).

Ala2 carries the post-translational modification N-acetylalanine. Transmembrane regions (helical) follow at residues 47 to 69, 84 to 103, 123 to 145, 150 to 172, 179 to 201, 221 to 243, 256 to 278, 291 to 310, 317 to 339, and 344 to 366; these read WLAPNLITFSGFLLVVFNFLLMA, HVPDWVWIVVGILNFVAYTL, LFDHGLDSWSCVYFVVTVYSIFG, GVSVFVLYLLLWVVLFSFILSHW, ILFLPWGYDISQVTISFVYIVTA, LFTAMIIGCALCVTLPMSLLNFF, VYEAMVPLFSPCLLFILSTAWIL, VFYFMVGTAFANSTCQLIVC, CPTLNWLLVPLFLVVLVVNLGVA, and SILLYTLTTAFTLAHIHYGVRVV. Sec387 is a non-standard amino acid (selenocysteine).

It belongs to the CDP-alcohol phosphatidyltransferase class-I family. It depends on Mg(2+) as a cofactor. Requires Mn(2+) as cofactor. As to expression, widely expressed. Abundant in brain, placenta, liver and pancreas, followed by heart, skeletal muscle, lung and kidney. In brain it is strongly expressed in cerebellum, followed by the occipital pole and the frontal lobe.

The protein resides in the endoplasmic reticulum membrane. It catalyses the reaction CDP-ethanolamine + a 1,2-diacyl-sn-glycerol = a 1,2-diacyl-sn-glycero-3-phosphoethanolamine + CMP + H(+). The catalysed reaction is 1-O-alkyl-2-acyl-sn-glycerol + CDP-ethanolamine = a 1-O-alkyl-2-acyl-sn-glycero-3-phosphoethanolamine + CMP + H(+). The protein operates within phospholipid metabolism; phosphatidylethanolamine biosynthesis; phosphatidylethanolamine from ethanolamine: step 3/3. In terms of biological role, ethanolaminephosphotransferase that catalyzes the transfer of phosphoethanolamine (PE) from CDP-ethanolamine to lipid acceptors, the final step in the synthesis of PE via the 'Kennedy' pathway. PE is the second most abundant phospholipid of membranes in mammals and is involved in various membrane-related cellular processes. The enzyme is critical for the synthesis of several PE species and also catalyzes the synthesis of plasmanyl-PE, a lipid required for proper myelination and neurodevelopment, from 1-alkyl-2-acylglycerol. This is Ethanolaminephosphotransferase 1 from Homo sapiens (Human).